We begin with the raw amino-acid sequence, 501 residues long: Probable cytosol aminopeptidase (501 aa).

Mn(2+) is bound by residues lysine 267 and aspartate 272. Lysine 279 is a catalytic residue. Positions 290, 349, and 351 each coordinate Mn(2+). Residue arginine 353 is part of the active site.

This sequence belongs to the peptidase M17 family. It depends on Mn(2+) as a cofactor.

The protein localises to the cytoplasm. It catalyses the reaction Release of an N-terminal amino acid, Xaa-|-Yaa-, in which Xaa is preferably Leu, but may be other amino acids including Pro although not Arg or Lys, and Yaa may be Pro. Amino acid amides and methyl esters are also readily hydrolyzed, but rates on arylamides are exceedingly low.. It carries out the reaction Release of an N-terminal amino acid, preferentially leucine, but not glutamic or aspartic acids.. In terms of biological role, presumably involved in the processing and regular turnover of intracellular proteins. Catalyzes the removal of unsubstituted N-terminal amino acids from various peptides. The chain is Probable cytosol aminopeptidase from Hamiltonella defensa subsp. Acyrthosiphon pisum (strain 5AT).